The sequence spans 346 residues: D-alanine--D-alanine ligase (346 aa).

In terms of domain architecture, ATP-grasp spans 133–327 (KLYAKSVGVK…ALADQISLEK (195 aa)). An ATP-binding site is contributed by 159–211 (LSFPCIIKPARLGSSIGISIVKDEKDLEYAKDVGFEFDNDLVVEEFKNNIKEY). Positions 284, 296, and 298 each coordinate Mg(2+).

This sequence belongs to the D-alanine--D-alanine ligase family. The cofactor is Mg(2+). Requires Mn(2+) as cofactor.

The protein localises to the cytoplasm. It catalyses the reaction 2 D-alanine + ATP = D-alanyl-D-alanine + ADP + phosphate + H(+). The protein operates within cell wall biogenesis; peptidoglycan biosynthesis. Cell wall formation. This chain is D-alanine--D-alanine ligase, found in Campylobacter jejuni subsp. jejuni serotype O:23/36 (strain 81-176).